Consider the following 839-residue polypeptide: MRPRATTICSLFFLLRVLAEPAKNSDFYLPGDYLLGGLFTLHANMKGIVHLDYLQVPMCKEYETKVIGYNLMQAMRFAVEEINNDSSLLPDVLLGYEMVDVCYVSNNVQPVLYFLAQEDDLLPIQENYSNYVSRVVAVIGPDNSDAVMTVANFLSLFLLPQITYSAISDELRDKVRFPALLRTAPSADHHIEAMVQLMLHFRWNWIIVLVSGDTYGRDNGQLLGDRLARGDICIAFQETLPTVQPNQNMTSEERQRLVTIVDKLQQSTARVVVVFSPDLTLYNFFNEVLRQNFTGAVWIASESWAIDPVLHNLTELRHMGTFLGITIQSVPIPGFSEFRVRDPQAGPPPLSRTSQRSTCNQECDSCLNGTLSFNNVLRLSGERVVYSVYSAVYAVAHALHSLLGCDHGTCTKTEVYPWQLLKEIWKVNFTLLDHQISFDPQGDMALHLEIVQWQWDLSQNPFQSVASYYPLQRQLKTIQDISWHTINNTIPVSMCSKRCQSGQKKKPVGIHICCFECIDCLPGTFLNQTEDEYECQACPSNEWSHQSEASCFKRRLAFLEWHEAPTIVVALLAALGFLSTLAILVIFWRHFQTPMVRSAGGPMCFLMLTLLLVAYMVVPVYVGPPKVSTCFCRQALFPLCFTICISCIAVRSFQIVCVFKMASRFPRAYSYWVRYQGPYVSMAFITVLKMVTVVIGMLATGLNPTTRIDPDDPKIMIVSCNPNYRNSLFFNTGLDLLLSVVGFSFAYMGKELPTNYNEAKFITLSMTFYFTSSVSLCTFMSAYNGVLVTIMDLLVTVLNLLAISLGYFGPKCYMILFYPERNTPAYFNSMIQGYTMRRD.

Positions 1 to 19 (MRPRATTICSLFFLLRVLA) are cleaved as a signal peptide. At 20 to 566 (EPAKNSDFYL…AFLEWHEAPT (547 aa)) the chain is on the extracellular side. 9 N-linked (GlcNAc...) asparagine glycosylation sites follow: Asn84, Asn127, Asn248, Asn292, Asn312, Asn368, Asn428, Asn487, and Asn527. Residues 567–587 (IVVALLAALGFLSTLAILVIF) traverse the membrane as a helical segment. Residues 588-602 (WRHFQTPMVRSAGGP) lie on the Cytoplasmic side of the membrane. The chain crosses the membrane as a helical span at residues 603–623 (MCFLMLTLLLVAYMVVPVYVG). Topologically, residues 624-635 (PPKVSTCFCRQA) are extracellular. A helical transmembrane segment spans residues 636–656 (LFPLCFTICISCIAVRSFQIV). Topologically, residues 657–681 (CVFKMASRFPRAYSYWVRYQGPYVS) are cytoplasmic. A helical transmembrane segment spans residues 682 to 702 (MAFITVLKMVTVVIGMLATGL). The Extracellular portion of the chain corresponds to 703-727 (NPTTRIDPDDPKIMIVSCNPNYRNS). A helical transmembrane segment spans residues 728-748 (LFFNTGLDLLLSVVGFSFAYM). The Cytoplasmic segment spans residues 749-760 (GKELPTNYNEAK). Residues 761–781 (FITLSMTFYFTSSVSLCTFMS) form a helical membrane-spanning segment. The Extracellular portion of the chain corresponds to 782-784 (AYN). The chain crosses the membrane as a helical span at residues 785 to 805 (GVLVTIMDLLVTVLNLLAISL). Topologically, residues 806–839 (GYFGPKCYMILFYPERNTPAYFNSMIQGYTMRRD) are cytoplasmic.

The protein belongs to the G-protein coupled receptor 3 family. TAS1R subfamily. In terms of assembly, forms heterodimers with TAS1R3.

The protein localises to the cell membrane. Putative taste receptor. TAS1R2/TAS1R3 recognizes diverse natural and synthetic sweeteners. In Papio hamadryas (Hamadryas baboon), this protein is Taste receptor type 1 member 2 (TAS1R2).